The primary structure comprises 555 residues: Glutamine--tRNA ligase (555 aa).

A 'HIGH' region motif is present at residues proline 34–histidine 44. ATP-binding positions include glutamate 35–asparagine 37 and histidine 41–serine 47. Residues aspartate 67 and tyrosine 212 each coordinate L-glutamine. Residues threonine 231, arginine 261–leucine 262, and methionine 269–lysine 271 contribute to the ATP site. A 'KMSKS' region motif is present at residues valine 268–arginine 272. Residues threonine 317–glutamate 324 are interaction with tRNA.

It belongs to the class-I aminoacyl-tRNA synthetase family. As to quaternary structure, monomer.

The protein resides in the cytoplasm. The enzyme catalyses tRNA(Gln) + L-glutamine + ATP = L-glutaminyl-tRNA(Gln) + AMP + diphosphate. This is Glutamine--tRNA ligase from Salmonella newport (strain SL254).